The sequence spans 263 residues: Acyl-[acyl-carrier-protein]--UDP-N-acetylglucosamine O-acyltransferase (263 aa).

The protein belongs to the transferase hexapeptide repeat family. LpxA subfamily. As to quaternary structure, homotrimer.

The protein resides in the cytoplasm. The enzyme catalyses a (3R)-hydroxyacyl-[ACP] + UDP-N-acetyl-alpha-D-glucosamine = a UDP-3-O-[(3R)-3-hydroxyacyl]-N-acetyl-alpha-D-glucosamine + holo-[ACP]. It functions in the pathway glycolipid biosynthesis; lipid IV(A) biosynthesis; lipid IV(A) from (3R)-3-hydroxytetradecanoyl-[acyl-carrier-protein] and UDP-N-acetyl-alpha-D-glucosamine: step 1/6. Involved in the biosynthesis of lipid A, a phosphorylated glycolipid that anchors the lipopolysaccharide to the outer membrane of the cell. In Campylobacter jejuni (strain RM1221), this protein is Acyl-[acyl-carrier-protein]--UDP-N-acetylglucosamine O-acyltransferase.